The primary structure comprises 303 residues: Nucleotide-binding protein SAR0820 (303 aa).

18–25 (GLSGAGKS) serves as a coordination point for ATP. 69-72 (DLRG) lines the GTP pocket.

It belongs to the RapZ-like family.

Its function is as follows. Displays ATPase and GTPase activities. The chain is Nucleotide-binding protein SAR0820 from Staphylococcus aureus (strain MRSA252).